Here is a 1237-residue protein sequence, read N- to C-terminus: Zinc finger protein ZFAT (1237 aa).

The segment at 12–35 (FMCKCCNLFSPNQSELVTHVSEKH) adopts a C2H2-type 1 zinc-finger fold. The tract at residues 50–110 (RPLNTPENPN…GPLATEEGSR (61 aa)) is disordered. Residues 70 to 81 (MKRKRGRPKGST) are compositionally biased toward basic residues. A C2H2-type 2; degenerate zinc finger spans residues 116-141 (LECSKCCRKFSNTRQLRKHICIIVLN). The disordered stretch occupies residues 147 to 188 (GDAGNESDLDLEKTYKEDDREKASKRPRAQKTEKVQKISGKE). Residues 156–186 (DLEKTYKEDDREKASKRPRAQKTEKVQKISG) show a composition bias toward basic and acidic residues. C2H2-type zinc fingers lie at residues 271 to 293 (FTCE…LRIH), 299 to 321 (YKCS…LRKH), 326 to 349 (FACD…ERVH), 354 to 377 (QHCR…RDMH), 404 to 426 (YDCH…MLVH), 432 to 454 (FACE…VRKH), and 458 to 481 (YVCA…REVH). Residues Cys-273, Cys-276, His-289, His-293, Cys-301, Cys-304, His-317, His-321, Cys-328, Cys-331, His-344, His-349, Cys-356, Cys-359, His-372, His-377, Cys-406, Cys-409, His-422, and His-426 each contribute to the Zn(2+) site. Residues Cys-460, Cys-463, His-476, and His-481 each coordinate Zn(2+). Disordered stretches follow at residues 551–576 (VPGD…LSPC) and 601–671 (SDTS…CLRA). The span at 565–574 (TPQSESSSLS) shows a compositional bias: polar residues. Low complexity predominate over residues 601-617 (SDTSSAEPPAAAEATSD). 4 C2H2-type zinc fingers span residues 737 to 759 (LECE…VRTH), 765 to 788 (YYCS…IQKH), 793 to 817 (LKCP…LKVH), and 825 to 848 (YSCP…KTNH). The Zn(2+) site is built by Cys-767, Cys-770, His-783, His-788, Cys-795, Cys-800, His-813, His-817, Cys-827, Cys-830, His-843, His-848, Cys-877, Cys-880, His-894, His-898, Cys-906, Cys-909, His-922, His-926, Cys-934, Cys-937, His-950, and Leu-953. Residues 875–898 (MKCPYCDFYFMKNGSDLQRHIWAH) form a C2H2-type 14; degenerate zinc finger. C2H2-type zinc fingers lie at residues 904–926 (FKCS…MNRH), 932–954 (HLCD…KLLH), 961–983 (FKCT…MEQH), 989–1012 (FRCA…NRKH), and 1036–1059 (LKCP…KNKH).

Detected in spleen and thymus but not in liver, muscle, heart, kidney, brain, bone marrow or pancreas. Expressed in CD19+, CD4+ and CD8+ lymphocytes but not in CD11b+ lymphocytes or peritoneal macrophages (at protein level).

It is found in the nucleus. The protein localises to the cytoplasm. The protein resides in the cytosol. In terms of biological role, may be involved in transcriptional regulation. Overexpression causes down-regulation of a number of genes involved in the immune response. Some genes are also up-regulated. The sequence is that of Zinc finger protein ZFAT (Zfat) from Mus musculus (Mouse).